Here is a 260-residue protein sequence, read N- to C-terminus: Achaete-scute homolog 2 (260 aa).

Disordered stretches follow at residues 85–126 (AGAC…RNER) and 191–239 (PATR…EDSS). Composition is skewed to low complexity over residues 110-121 (ATEASSSSAAVA) and 200-218 (TQPSASPASASLSCTSTSP). One can recognise a bHLH domain in the interval 118 to 170 (AAVARRNERERNRVKLVNLGFQALRQHVPHGGANKKLSKVETLRSAVEYIRAL).

As to quaternary structure, efficient DNA binding requires dimerization with another bHLH protein. Forms heterodimers with bHLH transcription factor TCF3. May not heterodimerise with bHLH protein HAND1. In terms of tissue distribution, expressed in Schwann cells in the peripheral nerve (at protein level). Also expressed by endothelial cells (at protein level). May be expressed in neuronal precursor cells.

Its subcellular location is the nucleus. It is found in the cytoplasm. In terms of biological role, transcription factor. Binds to E-box motifs 5'-CANNTG-3' in the regulatory elements of target genes, probably as a heterodimer with another basic helix-loop-helix (bHLH) protein such as the transcription factor TCF3. May bind both open and closed chromatin, acting as a pioneer transcription factor to allow other factors to bind and activate lineage-specific genes. Required during post-implantation development for the generation of some differentiated trophoblast cell types. Transcriptional activity of ASCL2 may be antagonised in a subset of trophoblast cells by bHLH transcription factor HAND1, perhaps by competing for dimerization with other bHLH proteins. Involved in differentiation and function of follicular T-helper (Tfh) cells, thereby playing a role in germinal center responses; probably modulates expression of genes involved in Tfh cell function, such as BCL6. May also act as a suppressor of Th1-, Th2- and Th17-cell differentiation. Induces the formation of stem cells in intestinal crypts in vitro, synergistically activating transcription of target genes, such as SOX9, together with TCF4/beta-catenin. May form a bistable transcriptional switch, controlling expression of its own gene together with Wnt/R-spondin signaling, and thereby maintaining stem cell characteristics. Modulates expression of target genes, including perhaps down-regulating EGR1/Krox24 and chemokine CXCL10/Mob-1 and up-regulating CXCR4 and CDKN1C/p57kip2, in Schwann cells. May play a role in reducing proliferation of Schwann cells, perhaps acting via modulation of expression of CDKN1C. May be dispensable for blastocyst formation and later embryonic function. May be involved in the determination of neuronal precursors. In Rattus norvegicus (Rat), this protein is Achaete-scute homolog 2 (Ascl2).